The primary structure comprises 537 residues: Asparagine-rich protein (537 aa).

Disordered stretches follow at residues 1–22 (YNNN…QNTN), 187–254 (NMNI…NNNF), 336–372 (YNNN…YGYD), 399–479 (LNNN…DDWG), and 509–528 (DLSK…MKKD). Low complexity-rich tracts occupy residues 336–347 (YNNNESNTANPN) and 399–469 (LNNN…NQNN). The segment covering 470–479 (NEDEDDDDWG) has biased composition (acidic residues). Basic and acidic residues predominate over residues 509 to 518 (DLSKKGNDGK).

This chain is Asparagine-rich protein, found in Plasmodium falciparum.